The following is a 224-amino-acid chain: NBPF family member NBPF6-like protein (224 aa).

Residues 159–224 (ENHHDRKDEE…ASVCDVQDQL (66 aa)) enclose the Olduvai domain. Residues 198 to 209 (YLTHSSHHDSHR) are compositionally biased toward basic and acidic residues. The tract at residues 198–224 (YLTHSSHHDSHRPPSSIASVCDVQDQL) is disordered.

Belongs to the NBPF family.

The polypeptide is NBPF family member NBPF6-like protein (Bos taurus (Bovine)).